We begin with the raw amino-acid sequence, 163 residues long: Endoribonuclease YbeY (163 aa).

Residues histidine 116, histidine 120, and histidine 126 each coordinate Zn(2+).

The protein belongs to the endoribonuclease YbeY family. It depends on Zn(2+) as a cofactor.

The protein localises to the cytoplasm. Single strand-specific metallo-endoribonuclease involved in late-stage 70S ribosome quality control and in maturation of the 3' terminus of the 16S rRNA. This Idiomarina loihiensis (strain ATCC BAA-735 / DSM 15497 / L2-TR) protein is Endoribonuclease YbeY.